The primary structure comprises 368 residues: WAT1-related protein At5g40240 (368 aa).

The next 10 helical transmembrane spans lie at 18-38, 50-70, 82-102, 111-131, 142-162, 194-214, 226-246, 260-280, 292-312, and 315-335; these read VVPFAAMFAVECATVGSNTLF, VFVFYSYIVSTLLLLPLSVIF, PLFFKIFLLGLVGFMSQIAGC, TLASAISNLTPAFTFTLAVIF, ATQAKIIGAILSISGALVVVL, WIIGGLLLASQYFLISVWYIL, ITVVFFYNLFATLISVPVCLF, ISLAAIIYSGVFVSLFSALTH, ISLFRPLSIAIAVAMGAIFLG, and LHLGSVIGSMILCIGFYTVIW. EamA domains follow at residues 33-161 and 208-334; these read GSNT…LVVV and ISVW…YTVI.

This sequence belongs to the drug/metabolite transporter (DMT) superfamily. Plant drug/metabolite exporter (P-DME) (TC 2.A.7.4) family.

It is found in the membrane. This Arabidopsis thaliana (Mouse-ear cress) protein is WAT1-related protein At5g40240.